The primary structure comprises 638 residues: MGKIIGIDLGTTNSCLAIIEGGKGRVIENSEGDRTTPSIVAYTKDGEVLVGAAAKRQAVTNPKNTFYAVKRLIGRKFGDAEVQKDLDLVPYKITQHDNGDAWVATADGKKLAPQEISAKVLEKMKKTAEDFLGEKVTEAVITVPAYFNDSQRQATKDAGRIAGLDVKRIINEPTAAALAYGLDKKGGDRKIAVYDLGGGTFDVSIIEIAEVDGEKQFEVLATNGDTFLGGEDFDKRVIDYLVDEFNKDQGIDLRKDPLALQRLKDAAERAKIELSSSQQTEVNLPYITADASGPKHLNIKLTRAKLEALVDDLVRKSIEPCRIALNDAGLRTSDVQEVILVGGQTRMPKVQQAVADFFGKEPRKDVNPDEAVALGAAIQGGVLAGDVKDVLLLDVTPLSLGIETMGGVFTKIIEKNTTIPTKASQVFSTAEDGQSAVTVHVLQGEREQARFNKSLAKFDLAGIEPAPRGQPQIEVSFDIDANGILHVSAKDKKTNKEQKVEVKAGSGLSDSEIQQMVADAEAHREEDKKFQELVQARNHADGLIHSTRSAIKEHGSKVGGELIGRVEASLAELEAAVKGDDKNQIEAKSKTLEEVAQSLHMAATAEQQSASTGAGAGSSAKVDDVVDAEFTEVKGDKK.

Threonine 200 is subject to Phosphothreonine; by autocatalysis. The segment at 599–623 (LHMAATAEQQSASTGAGAGSSAKVD) is disordered. The segment covering 609 to 620 (SASTGAGAGSSA) has biased composition (low complexity).

This sequence belongs to the heat shock protein 70 family.

Acts as a chaperone. This Xylella fastidiosa (strain M12) protein is Chaperone protein DnaK.